Here is a 116-residue protein sequence, read N- to C-terminus: NADH-ubiquinone oxidoreductase chain 3 (116 aa).

3 helical membrane-spanning segments follow: residues 4-24, 56-76, and 88-108; these read IIFL…AAHA, FFLV…LFPL, and LIPI…FEWI.

It belongs to the complex I subunit 3 family.

It is found in the mitochondrion membrane. It carries out the reaction a ubiquinone + NADH + 5 H(+)(in) = a ubiquinol + NAD(+) + 4 H(+)(out). Its function is as follows. Core subunit of the mitochondrial membrane respiratory chain NADH dehydrogenase (Complex I) that is believed to belong to the minimal assembly required for catalysis. Complex I functions in the transfer of electrons from NADH to the respiratory chain. The immediate electron acceptor for the enzyme is believed to be ubiquinone. The chain is NADH-ubiquinone oxidoreductase chain 3 (ND3) from Strongylocentrotus purpuratus (Purple sea urchin).